Consider the following 299-residue polypeptide: Ankyrin repeat domain-containing protein 54 (299 aa).

A disordered region spans residues 1-27; the sequence is MAATGGGADDESRSGRSSSDGECAVAP. At alanine 2 the chain carries N-acetylalanine. Serine 62 is subject to Phosphoserine. The Nuclear localization signal (NLS) motif lies at 98-116; sequence RRLGPTGKEVHALKRLRDS. 4 ANK repeats span residues 108–137, 141–170, 174–203, and 207–239; these read HALK…DPCA, KGRT…DPNQ, LGNT…RVDA, and AGRT…EVKQ. The segment at 140–240 is LYN-binding; the sequence is DKGRTALHFA…EAVRLEVKQI (101 aa). The Nuclear export signal (NES) signature appears at 282-292; it reads LLASFTSLSLQ.

As to quaternary structure, interacts (via ankyrin repeat region) with LYN (via SH3-domain) in an activation-independent status of LYN. Forms a multiprotein complex with LYN and HCLS1. Interacts with TSN2, VAV1, DBNL and LASP1. In terms of tissue distribution, expressed in a variety of hemopoietic cell lines and tissue with high levels in testis. Highly expressed in ciliated cells.

The protein localises to the nucleus. The protein resides in the cytoplasm. It localises to the midbody. Functionally, plays an important role in regulating intracellular signaling events associated with erythroid terminal differentiation. This chain is Ankyrin repeat domain-containing protein 54 (Ankrd54), found in Mus musculus (Mouse).